Here is a 327-residue protein sequence, read N- to C-terminus: Poly(ribitol-phosphate) beta-N-acetylglucosaminyltransferase TarP (327 aa).

Residues Pro9, Asp41, Asn68, Arg76, and 92–94 contribute to the UDP-N-acetyl-alpha-D-glucosamine site; that span reads DSD. Position 94 (Asp94) interacts with Mn(2+). The active-site Proton acceptor is Asp181.

This sequence belongs to the glycosyltransferase 2 family. Homotrimer. It depends on Mn(2+) as a cofactor.

It carries out the reaction 4-O-[(D-ribitylphospho)(n)-di{(2R)-glycerylphospho}]-N-acetyl-beta-D-mannosaminyl-(1-&gt;4)-N-acetyl-alpha-D-glucosaminyl di-trans,octa-cis-undecaprenyl diphosphate + n UDP-N-acetyl-alpha-D-glucosamine = 4-O-([3-N-acetyl-beta-D-glucosaminyl-1-D-ribitylphospho](n)-di{[2R]-1-glycerylphospho})-N-acetyl-beta-D-mannosaminyl-(1-&gt;4)-N-acetyl-alpha-D-glucosaminyl di-trans,octa-cis-undecaprenyl diphosphate + n UDP + n H(+). Its pathway is cell wall biogenesis; poly(ribitol phosphate) teichoic acid biosynthesis. Attaches beta-O-GlcNAc (beta-O-N-acetyl-D-glucosamine) residues to the C3 position of poly(RboP)-wall teichoic acids (WTAs). Attenuates immunogenicity of WTA and protects S.aureus against adaptative host defenses by allowing bacteria to evade recognition by preexisting anti-S.aureus antibodies. Also protects the cell from podophage infection. The polypeptide is Poly(ribitol-phosphate) beta-N-acetylglucosaminyltransferase TarP (Staphylococcus aureus (strain N315)).